A 113-amino-acid polypeptide reads, in one-letter code: MLVVYMCIWVLYLLLFLFLFLFIASPASLRRSQTHILQCLYYFSLLLISGCAFFHQVLCLVLPLFCFVLFCFFYFFRSALEVFASLFPLPFSTRSHETISKSRIIIKAARGII.

The first 29 residues, 1 to 29 (MLVVYMCIWVLYLLLFLFLFLFIASPASL), serve as a signal peptide directing secretion. 2 consecutive transmembrane segments (helical) span residues 34-54 (THILQCLYYFSLLLISGCAFF) and 56-76 (QVLCLVLPLFCFVLFCFFYFF).

It localises to the membrane. This is an uncharacterized protein from Saccharomyces cerevisiae (strain ATCC 204508 / S288c) (Baker's yeast).